A 100-amino-acid chain; its full sequence is Small ribosomal subunit protein uS14c (100 aa).

Belongs to the universal ribosomal protein uS14 family. Part of the 30S ribosomal subunit.

It localises to the plastid. It is found in the chloroplast. Binds 16S rRNA, required for the assembly of 30S particles. The protein is Small ribosomal subunit protein uS14c of Platanus occidentalis (Sycamore).